Consider the following 116-residue polypeptide: Somatostatin (116 aa).

The signal sequence occupies residues 1-24; the sequence is MLSCRLQCALAALSIVLALGCVTG. Residues 25 to 88 constitute a propeptide that is removed on maturation; that stretch reads APSDPRLRQF…QDEMRLELQR (64 aa). Alanine 43 carries the alanine amide modification. Residues 62–82 are disordered; it reads QTENDALEPEDLSQAAEQDEM. Cysteine 105 and cysteine 116 are oxidised to a cystine.

Belongs to the somatostatin family. Post-translationally, C-terminal amidation of the neuronostatin peptide is required for its biological activity, including for the regulation of mean arterial pressure.

Its subcellular location is the secreted. Its function is as follows. Inhibits the secretion of pituitary hormones, including that of growth hormone/somatotropin (GH1), PRL, ACTH, luteinizing hormone (LH) and TSH. Also impairs ghrelin- and GnRH-stimulated secretion of GH1 and LH; the inhibition of ghrelin-stimulated secretion of GH1 can be further increased by neuronostatin. May enhance low-glucose-induced glucagon release by pancreatic alpha cells. This effect may be mediated by binding to GPR107 and PKA activation. May regulate cardiac contractile function. May compromise cardiomyocyte viability. In the central nervous system, may impair memory retention and may affect hippocampal excitability. May also have anxiolytic and anorexigenic effects. May play a role in arterial pressure regulation. May inhibit basal, but not ghrelin- or GnRH-stimulated secretion of GH1 or LH, but does not affect the release of other pituitary hormones, including PRL, ACTH, FSH or TSH. Potentiates inhibitory action of somatostatin on ghrelin-stimulated secretion of GH1, but not that on GnRH-stimulated secretion of LH. This Homo sapiens (Human) protein is Somatostatin (SST).